A 198-amino-acid polypeptide reads, in one-letter code: dCTP deaminase (198 aa).

DCTP contacts are provided by residues 99–104 (RSSLGR), 125–127 (TLE), and Gln144. Glu127 acts as the Proton donor/acceptor in catalysis.

It belongs to the dCTP deaminase family. Homotrimer.

The enzyme catalyses dCTP + H2O + H(+) = dUTP + NH4(+). It participates in pyrimidine metabolism; dUMP biosynthesis; dUMP from dCTP (dUTP route): step 1/2. Functionally, catalyzes the deamination of dCTP to dUTP. This is dCTP deaminase from Rhodopirellula baltica (strain DSM 10527 / NCIMB 13988 / SH1).